We begin with the raw amino-acid sequence, 431 residues long: GTPase Obg (431 aa).

The 158-residue stretch at 1–158 folds into the Obg domain; that stretch reads MFVDQVKISL…IEVTLELKLL (158 aa). A disordered region spans residues 118–144; the sequence is KGGRGGRGNSRFASPRNPAPDFSENGE. An OBG-type G domain is found at 159-330; that stretch reads ADVGLVGFPS…LLYAIADKLE (172 aa). GTP contacts are provided by residues 165–172, 190–194, 212–215, 282–285, and 311–313; these read GFPSVGKS, FTTIK, DLPG, NKMD, and STF. Mg(2+)-binding residues include S172 and T192. In terms of domain architecture, OCT spans 353–431; the sequence is KHTPSQDKFT…ILGGEFEFVE (79 aa).

It belongs to the TRAFAC class OBG-HflX-like GTPase superfamily. OBG GTPase family. In terms of assembly, monomer. Mg(2+) is required as a cofactor.

It localises to the cytoplasm. In terms of biological role, an essential GTPase which binds GTP, GDP and possibly (p)ppGpp with moderate affinity, with high nucleotide exchange rates and a fairly low GTP hydrolysis rate. Plays a role in control of the cell cycle, stress response, ribosome biogenesis and in those bacteria that undergo differentiation, in morphogenesis control. This is GTPase Obg from Staphylococcus saprophyticus subsp. saprophyticus (strain ATCC 15305 / DSM 20229 / NCIMB 8711 / NCTC 7292 / S-41).